Consider the following 471-residue polypeptide: Uronate isomerase (471 aa).

The protein belongs to the metallo-dependent hydrolases superfamily. Uronate isomerase family.

The catalysed reaction is D-glucuronate = D-fructuronate. It carries out the reaction aldehydo-D-galacturonate = keto-D-tagaturonate. Its pathway is carbohydrate metabolism; pentose and glucuronate interconversion. This Latilactobacillus sakei subsp. sakei (strain 23K) (Lactobacillus sakei subsp. sakei) protein is Uronate isomerase.